The sequence spans 199 residues: NADH-quinone oxidoreductase subunit C (199 aa).

The protein belongs to the complex I 30 kDa subunit family. As to quaternary structure, NDH-1 is composed of 14 different subunits. Subunits NuoB, C, D, E, F, and G constitute the peripheral sector of the complex.

The protein resides in the cell inner membrane. The enzyme catalyses a quinone + NADH + 5 H(+)(in) = a quinol + NAD(+) + 4 H(+)(out). NDH-1 shuttles electrons from NADH, via FMN and iron-sulfur (Fe-S) centers, to quinones in the respiratory chain. The immediate electron acceptor for the enzyme in this species is believed to be ubiquinone. Couples the redox reaction to proton translocation (for every two electrons transferred, four hydrogen ions are translocated across the cytoplasmic membrane), and thus conserves the redox energy in a proton gradient. The chain is NADH-quinone oxidoreductase subunit C from Rhodopseudomonas palustris (strain BisB18).